The chain runs to 779 residues: MQFGVPLLVLCLALGSTEATISLKLVSRLYLPFDKLPVGGGAGGAGGAGGAGGGGGGGGGAGGRGGGGGGRGQTGGMYALNNGVAFKSAYDMDKQLAYVGGGQFVQIVDFSDVVQPKVVKQIATEGPVADIAECGDLVAFTQPGKPHFTDVGSLKIYEKYNPATMMMKELCSVEVGSQPIAVRFAQGCSLIIVANEGVMGENNYTKKYVNPEGTITTVRLAGSVSNGPSQQIVNTTFGAGGPMMTTPMAGFPRGTTWSPNAGAGGQGGQGQYPGQGGQGGQGGQGGQGQYPGQGGQGGQGGQGGQGGQGGYPGQGGQGGPGYYPGQGGQGGQGGQGGWGQGGGQGGQGGGNNPQYPMIPTTPLPGTICNGTSTMSYVVSQINFHKFNAPAEVQRLKALHVRQPYTGQLGDPGPHTFSRGLEPRHITLDQQEQIAYISLQENNAIAVVDLNNNTVIDILPMGVKNWKGLKIDASSADRGILFQTYDQLNSFPMPDAIETYYDAMGDLYVVTANEGAKPMMAQCSLEVCPGGPGEFEEVEIGEEFIVEELLPQPVIDSPLGQAMAEETQLGSSLFSMVDGINPAEPEFFNEVFMFGGRGISAYKVDPITMNMTLAWDSGDVIEKEIAKFFPKIFNGAAFSRPPQRVKPFMTKDSRSSGRGPECESLAVGDVQGRKLIFVGIDGVSALAIFSVAPGNSTPVYESLFKDGHIDASYNALYKNRKTGRVSGTVSMYEVIDVPYWMLLKTLGTNIEGSSAISMTSSAFSIFFAFLSGMFAIFMKM.

An N-terminal signal peptide occupies residues 1–15 (MQFGVPLLVLCLALG). N-linked (GlcNAc...) asparagine glycans are attached at residues asparagine 203 and asparagine 234. The disordered stretch occupies residues 249–363 (AGFPRGTTWS…QYPMIPTTPL (115 aa)). Gly residues predominate over residues 262-351 (GAGGQGGQGQ…GGQGGQGGGN (90 aa)). N-linked (GlcNAc...) asparagine glycans are attached at residues asparagine 369, asparagine 451, and asparagine 609.

As to expression, restricted to the primary mesenchyme cell lineage.

The protein resides in the cell membrane. Its function is as follows. Not known. Could be involved in mesenchyme cell migration, adhesion, fusion, or spicule formation. This is Mesenchyme-specific cell surface glycoprotein from Strongylocentrotus purpuratus (Purple sea urchin).